The primary structure comprises 451 residues: G-protein coupled receptor 61 (451 aa).

The span at 1–14 (MESSPIPQSSGNSS) shows a compositional bias: low complexity. Positions 1 to 31 (MESSPIPQSSGNSSTLGRVPQTPGPSTASGV) are disordered. Over 1 to 44 (MESSPIPQSSGNSSTLGRVPQTPGPSTASGVPEVGLRDVASESV) the chain is Extracellular. N-linked (GlcNAc...) asparagine glycosylation is present at Asn12. A helical membrane pass occupies residues 45 to 67 (ALFFMLLLDLTAVAGNAAVMAVI). Topologically, residues 68-75 (AKTPALRK) are cytoplasmic. A helical membrane pass occupies residues 76-98 (FVFVFHLCLVDLLAALTLMPLAM). At 99-112 (LSSSALFDHALFGE) the chain is on the extracellular side. A helical membrane pass occupies residues 113–135 (VACRLYLFLSVCFVSLAILSVSA). At 136-155 (INVERYYYVVHPMRYEVRMT) the chain is on the cytoplasmic side. A helical membrane pass occupies residues 156 to 178 (LGLVASVLVGVWVKALAMASVPV). At 179 to 206 (LGRVSWEEGAPSVPPGCSLQWSHSAYCQ) the chain is on the extracellular side. The chain crosses the membrane as a helical span at residues 207–229 (LFVVVFAVLYFLLPLLLILVVYC). At 230–287 (SMFRVARVAAMQHGPLPTWMETPRQRSESLSSRSTMVTSSGAPQTTPHRTFGGGKAAV) the chain is on the cytoplasmic side. Residues 288-310 (VLLAVGGQFLLCWLPYFSFHLYV) traverse the membrane as a helical segment. Residues 311–324 (ALSAQPISTGQVES) are Extracellular-facing. The chain crosses the membrane as a helical span at residues 325-344 (VVTWIGYFCFTSNPFFYGCL). The Cytoplasmic portion of the chain corresponds to 345 to 451 (NRQIRGELSK…RPAASPRLES (107 aa)).

This sequence belongs to the G-protein coupled receptor 1 family. Forms heterodimer with MTNR1B. Interacts with ARRB1 and ARRB2 in a spontaneous and agonist-independent manner; leading to the internalization of GPR61 in the endosomal compartment. Expressed in brain; detected in frontal and temporal lobes, occipital pole, amygdala and hippocampus. Also expressed in testis and T cells, B cells, and monocyte. Low expression in many other tissues. Widely expressed in the hippocampus (at protein level).

The protein localises to the cell membrane. It is found in the endosome membrane. Orphan G-protein coupled receptor. Constitutively activates the G(s)-alpha/cAMP signaling pathway. Shows a reciprocal regulatory interaction with the melatonin receptor MTNR1B most likely through receptor heteromerization. May be involved in the regulation of food intake and body weight. The protein is G-protein coupled receptor 61 (GPR61) of Homo sapiens (Human).